The primary structure comprises 440 residues: Dynein axonemal assembly factor 11 (440 aa).

4 LRR repeats span residues 20–43 (IFSL…HKWC), 44–65 (RDLK…VGRL), 66–89 (KKLE…GCES), and 90–110 (LQKL…ETLK). Residues 128 to 146 (YQGYRQYVVATVPQLQSLD) form the LRRCT domain. Residues 178–192 (EEREKQKSNANEHPE) show a composition bias toward basic and acidic residues. Disordered stretches follow at residues 178-267 (EERE…RTLI) and 363-440 (PKKR…PPLM). Positions 193–211 (INQSLSESQNGTQQYPESS) are enriched in polar residues. Positions 236-259 (SRLEAHRHLEEKRRANEKEKEKPK) are enriched in basic and acidic residues. Positions 276–374 (VNEPKLDFSL…KRTIRPTSVT (99 aa)) constitute a CS domain. A compositionally biased stretch (polar residues) spans 369 to 378 (RPTSVTSNQN). 2 stretches are compositionally biased toward basic and acidic residues: residues 379-392 (NKKD…RELL) and 420-431 (GLEERPVSKDFV).

This sequence belongs to the tilB family. Interacts with dvl2. Interacts with kur. In terms of tissue distribution, expressed in kinocilia of hair cells.

Its subcellular location is the cytoplasm. It is found in the dynein axonemal particle. It localises to the cell projection. The protein localises to the cilium. Functionally, plays a crucial role in regulating cilia motility in pronephric tubules, cloaca and neural tube. Required for establishing left-right asymmetry of the body plan; controls cell fate and convergent extension (CE) movements during gastrulation, respectively, via the Wnt and the planar cell polarity (PCP) signaling pathways. Required for the proper development of renal glomeruli and tubules. This chain is Dynein axonemal assembly factor 11 (dnaaf11), found in Danio rerio (Zebrafish).